The chain runs to 472 residues: ATP synthase subunit beta (472 aa).

157-164 contributes to the ATP binding site; sequence GGAGVGKT.

The protein belongs to the ATPase alpha/beta chains family. As to quaternary structure, F-type ATPases have 2 components, CF(1) - the catalytic core - and CF(0) - the membrane proton channel. CF(1) has five subunits: alpha(3), beta(3), gamma(1), delta(1), epsilon(1). CF(0) has three main subunits: a(1), b(2) and c(9-12). The alpha and beta chains form an alternating ring which encloses part of the gamma chain. CF(1) is attached to CF(0) by a central stalk formed by the gamma and epsilon chains, while a peripheral stalk is formed by the delta and b chains.

Its subcellular location is the cell inner membrane. The enzyme catalyses ATP + H2O + 4 H(+)(in) = ADP + phosphate + 5 H(+)(out). Functionally, produces ATP from ADP in the presence of a proton gradient across the membrane. The catalytic sites are hosted primarily by the beta subunits. This Desulfatibacillum aliphaticivorans protein is ATP synthase subunit beta.